A 332-amino-acid polypeptide reads, in one-letter code: Biotin synthase (332 aa).

The Radical SAM core domain maps to 47–273 (YYGNKVKLNM…MNPTKEIRIA (227 aa)). Cys-65, Cys-69, and Cys-72 together coordinate [4Fe-4S] cluster. Residues Cys-109, Cys-141, Cys-201, and Arg-271 each contribute to the [2Fe-2S] cluster site.

The protein belongs to the radical SAM superfamily. Biotin synthase family. In terms of assembly, homodimer. [4Fe-4S] cluster serves as cofactor. It depends on [2Fe-2S] cluster as a cofactor.

It catalyses the reaction (4R,5S)-dethiobiotin + (sulfur carrier)-SH + 2 reduced [2Fe-2S]-[ferredoxin] + 2 S-adenosyl-L-methionine = (sulfur carrier)-H + biotin + 2 5'-deoxyadenosine + 2 L-methionine + 2 oxidized [2Fe-2S]-[ferredoxin]. The protein operates within cofactor biosynthesis; biotin biosynthesis; biotin from 7,8-diaminononanoate: step 2/2. Catalyzes the conversion of dethiobiotin (DTB) to biotin by the insertion of a sulfur atom into dethiobiotin via a radical-based mechanism. The chain is Biotin synthase from Geobacillus thermodenitrificans (strain NG80-2).